Here is a 341-residue protein sequence, read N- to C-terminus: S-adenosylmethionine:tRNA ribosyltransferase-isomerase (341 aa).

This sequence belongs to the QueA family. As to quaternary structure, monomer.

It is found in the cytoplasm. It carries out the reaction 7-aminomethyl-7-carbaguanosine(34) in tRNA + S-adenosyl-L-methionine = epoxyqueuosine(34) in tRNA + adenine + L-methionine + 2 H(+). It participates in tRNA modification; tRNA-queuosine biosynthesis. In terms of biological role, transfers and isomerizes the ribose moiety from AdoMet to the 7-aminomethyl group of 7-deazaguanine (preQ1-tRNA) to give epoxyqueuosine (oQ-tRNA). The protein is S-adenosylmethionine:tRNA ribosyltransferase-isomerase of Clostridioides difficile (strain 630) (Peptoclostridium difficile).